We begin with the raw amino-acid sequence, 279 residues long: Pantothenate synthetase (279 aa).

26–33 contacts ATP; it reads MGALHSGH. Residue His-33 is the Proton donor of the active site. Gln-57 is a binding site for (R)-pantoate. Position 57 (Gln-57) interacts with beta-alanine. 147 to 150 is an ATP binding site; the sequence is GQKD. Gln-153 serves as a coordination point for (R)-pantoate. Residues Ile-176 and 184 to 187 each bind ATP; that span reads ESSR.

This sequence belongs to the pantothenate synthetase family. As to quaternary structure, homodimer.

It localises to the cytoplasm. The catalysed reaction is (R)-pantoate + beta-alanine + ATP = (R)-pantothenate + AMP + diphosphate + H(+). Its pathway is cofactor biosynthesis; (R)-pantothenate biosynthesis; (R)-pantothenate from (R)-pantoate and beta-alanine: step 1/1. In terms of biological role, catalyzes the condensation of pantoate with beta-alanine in an ATP-dependent reaction via a pantoyl-adenylate intermediate. This Corynebacterium glutamicum (strain R) protein is Pantothenate synthetase.